A 365-amino-acid polypeptide reads, in one-letter code: Aminotransferase poxL (365 aa).

Position 92 (arginine 92) interacts with pyridoxal 5'-phosphate. The residue at position 193 (lysine 193) is an N6-(pyridoxal phosphate)lysine. Pyridoxal 5'-phosphate is bound at residue glutamate 229.

The protein belongs to the class-IV pyridoxal-phosphate-dependent aminotransferase family. The cofactor is pyridoxal 5'-phosphate.

It functions in the pathway secondary metabolite biosynthesis. In terms of biological role, aminotransferase; part of the gene cluster that mediates the biosynthesis of oxaleimides, cytotoxic compounds containing an unusual disubstituted succinimide moiety. The first step of the pathway is provided by the HR-PKS poxF that serves in a new mode of collaborative biosynthesis with the PKS-NRPS poxE, by providing the olefin containing amino acid substrate via the synthesis of an ACP-bound dec-4-enoate. The cytochrome P450 monooxygenase poxM-catalyzed oxidation at the alpha-position creates the enzyme-bound 2-hydroxydec-4-enoyl-ACP thioester, which may be prone to spontaneous hydrolysis to yield 2-hydroxydec-4-enoic acid due to increased electrophilicity of the carbonyl. 2-hydroxydec-4-enoic acid can then be further oxidized by poxM to yield the alpha-ketoacid 2-oxodec-4-enoicacid, which is reductively aminated by the aminotransferase poxL to yield (S,E)-2-aminodec-4-enoic acid. The Hybrid PKS-NRPS synthetase poxE then performs condensation between the octaketide product of its PKS modules and the amino group of (S,E)-2-aminodec-4-enoic acid which is activated and incorporated by the adenylation domain. The resulting aminoacyl product can be cyclized by the Diels-Alderase PoxQ and reductively released by the reductive (R) domain of poxE to yield an aldehyde intermediate. The released aldehyde is then substrate for a Knoevenagel condensation by the hydrolyase poxO followed by an oxidation at the 5-position of the pyrrolidone ring. The presence of the olefin from the amino acid building block allows for migration of the substituted allyl group to occur. This allylic transposition reaction takes place in a conjugate addition, semipinacol-like fashion to yield a succinimide intermediate. Iterative two-electron oxidations of the C7 methyl of the succinimide intermediate to the carboxylic acid can be catalyzed by one of two remaining cytochrome P450 monooxygenasess poxC or poxD to yield oxaleimide A. Subsequent oxidation yields the maleimide scaffold oxaleimide I. Both oxaleimide A and oxaleimide I can undergo oxidative modifications in the decalin ring to yield the series of products oxaleimides B to H. In Penicillium oxalicum (strain 114-2 / CGMCC 5302) (Penicillium decumbens), this protein is Aminotransferase poxL.